A 556-amino-acid chain; its full sequence is Dihydroxy-acid dehydratase (556 aa).

A Mg(2+)-binding site is contributed by aspartate 78. Residue cysteine 119 participates in [2Fe-2S] cluster binding. Residues aspartate 120 and lysine 121 each contribute to the Mg(2+) site. Lysine 121 carries the post-translational modification N6-carboxylysine. Cysteine 191 contacts [2Fe-2S] cluster. Glutamate 442 provides a ligand contact to Mg(2+). Serine 468 (proton acceptor) is an active-site residue.

It belongs to the IlvD/Edd family. In terms of assembly, homodimer. [2Fe-2S] cluster is required as a cofactor. Mg(2+) serves as cofactor.

It catalyses the reaction (2R)-2,3-dihydroxy-3-methylbutanoate = 3-methyl-2-oxobutanoate + H2O. It carries out the reaction (2R,3R)-2,3-dihydroxy-3-methylpentanoate = (S)-3-methyl-2-oxopentanoate + H2O. Its pathway is amino-acid biosynthesis; L-isoleucine biosynthesis; L-isoleucine from 2-oxobutanoate: step 3/4. It functions in the pathway amino-acid biosynthesis; L-valine biosynthesis; L-valine from pyruvate: step 3/4. Functionally, functions in the biosynthesis of branched-chain amino acids. Catalyzes the dehydration of (2R,3R)-2,3-dihydroxy-3-methylpentanoate (2,3-dihydroxy-3-methylvalerate) into 2-oxo-3-methylpentanoate (2-oxo-3-methylvalerate) and of (2R)-2,3-dihydroxy-3-methylbutanoate (2,3-dihydroxyisovalerate) into 2-oxo-3-methylbutanoate (2-oxoisovalerate), the penultimate precursor to L-isoleucine and L-valine, respectively. This is Dihydroxy-acid dehydratase from Caldanaerobacter subterraneus subsp. tengcongensis (strain DSM 15242 / JCM 11007 / NBRC 100824 / MB4) (Thermoanaerobacter tengcongensis).